A 178-amino-acid chain; its full sequence is Probetacellulin (178 aa).

The first 31 residues, 1–31 (MDRAARCSGASSLPLLLALALGLVILHCVVA), serve as a signal peptide directing secretion. Over 32-118 (DGNSTRSPET…LFYLRGDRGQ (87 aa)) the chain is Extracellular. N-linked (GlcNAc...) asparagine glycosylation occurs at Asn-34. One can recognise an EGF-like domain in the interval 65–105 (HFSRCPKQYKHYCIKGRCRFVVAEQTPSCVCDEGYIGARCE). Disulfide bonds link Cys-69–Cys-82, Cys-77–Cys-93, and Cys-95–Cys-104. Residues 112–178 (LRGDRGQILV…NEDIEETNIA (67 aa)) constitute a propeptide, removed in mature form. A helical membrane pass occupies residues 119 to 139 (ILVICLIAVMVVFIILVIGVC). Residues 140 to 178 (TCCHPLRKRRKRKKKEEEMETLGKDITPINEDIEETNIA) lie on the Cytoplasmic side of the membrane.

Monomer. Interacts with EGFR and ERBB4. As to expression, synthesized in several tissues and tumor cells. Predominantly expressed in pancreas and small intestine.

It localises to the secreted. The protein resides in the extracellular space. It is found in the cell membrane. Functionally, growth factor that binds to EGFR, ERBB4 and other EGF receptor family members. Potent mitogen for retinal pigment epithelial cells and vascular smooth muscle cells. In Homo sapiens (Human), this protein is Probetacellulin (BTC).